The primary structure comprises 318 residues: Methionyl-tRNA formyltransferase (318 aa).

112–115 is a (6S)-5,6,7,8-tetrahydrofolate binding site; that stretch reads SILP.

Belongs to the Fmt family.

It carries out the reaction L-methionyl-tRNA(fMet) + (6R)-10-formyltetrahydrofolate = N-formyl-L-methionyl-tRNA(fMet) + (6S)-5,6,7,8-tetrahydrofolate + H(+). Its function is as follows. Attaches a formyl group to the free amino group of methionyl-tRNA(fMet). The formyl group appears to play a dual role in the initiator identity of N-formylmethionyl-tRNA by promoting its recognition by IF2 and preventing the misappropriation of this tRNA by the elongation apparatus. This Shewanella sp. (strain MR-4) protein is Methionyl-tRNA formyltransferase.